The following is a 488-amino-acid chain: Bile acid receptor (488 aa).

Lys133 is covalently cross-linked (Glycyl lysine isopeptide (Lys-Gly) (interchain with G-Cter in SUMO1)). The segment at residues 135–210 is a DNA-binding region (nuclear receptor); it reads DELCVVCGDR…MGMLAECMYT (76 aa). An NR C4-type zinc finger spans residues 138–158; the sequence is CVVCGDRASGYHYNALTCEGC. Phosphoserine; by PKC/PRKCA is present on residues Ser146 and Ser165. Position 168 is an N6-acetyllysine; by EP300 (Lys168). The NR C4-type zinc-finger motif lies at 174-198; sequence CKNGGNCVMDMYMRRKCQECRLRKC. Lys221 is modified (N6-methyllysine; by SETD7). Lys228 carries the N6-acetyllysine; by EP300 modification. Residues 264 to 488 enclose the NR LBD domain; it reads DQQTLLDYIM…PLLCEIWDVQ (225 aa). Lys291 participates in a covalent cross-link: Glycyl lysine isopeptide (Lys-Gly) (interchain with G-Cter in SUMO1). Chenodeoxycholate contacts are provided by Arg347, Tyr377, and Tyr385. Thr458 carries the phosphothreonine; by PKC/PRKCZ modification. Position 463 (His463) interacts with chenodeoxycholate.

The protein belongs to the nuclear hormone receptor family. NR1 subfamily. In terms of assembly, heterodimer with RXRA; the heterodimerization enhances the binding affinity for LXXLL motifs from coactivators. Binds DNA predominantly as a heterodimer with RXRA. After activation by agonist binding interacts with coactivators. Interacts with PPARGC1A, SMARCA4 and EP300. Interacts with NCOA1, NCOA2, CARM1, SETD7, PRMT1, GPS2, SMARCA4 and MED1. Interacts with XRCC5 and XRCC6; decreasing NR1H4/FXR transactivation activity towards ABCB11/BSEP. Interacts with PAGR1 and NCOA6; indicative for an association with an MLL2/MLL3 complex (ASCOM). Interacts with NR5A2. Post-translationally, acetylated by EP300. Lys-228 as is the major acetylation site for EP300; the dynamicly regulated acetylation inhibits heterodimerization with RXRA and transactivation activity. Deacetylated by SIRT1. Elevated acetylation levels are found in metabolic disease states (mouse models of obesity and type II diabetes). Methylation may increase transactivation of target genes. In terms of processing, phosphorylation by PKC/PRKCA increases transactivation activity by promoting association with PPARGC1A. Post-translationally, sumoylated upon ligand binding. As to expression, expressed in liver and kidney. Expressed in pancreatic beta cells and macrophages. Expressed in the villus epithelium in adult ileum, with highest expression in the intervillus regions. Expression in colon is reduced by inflammation.

It localises to the nucleus. Functionally, ligand-activated transcription factor. Receptor for bile acids (BAs) such as chenodeoxycholic acid (CDCA), lithocholic acid, deoxycholic acid (DCA) and allocholic acid (ACA). Plays a essential role in BA homeostasis through the regulation of genes involved in BA synthesis, conjugation and enterohepatic circulation. Also regulates lipid and glucose homeostasis and is involved in innate immune response. The FXR-RXR heterodimer binds predominantly to farnesoid X receptor response elements (FXREs) containing two inverted repeats of the consensus sequence 5'-AGGTCA-3' in which the monomers are spaced by 1 nucleotide (IR-1) but also to tandem repeat DR1 sites with lower affinity, and can be activated by either FXR or RXR-specific ligands. It is proposed that monomeric nuclear receptors such as NR5A2/LRH-1 bound to coregulatory nuclear responsive element (NRE) halfsites located in close proximity to FXREs modulate transcriptional activity. In the liver activates transcription of the corepressor NR0B2 thereby indirectly inhibiting CYP7A1 and CYP8B1 (involved in BA synthesis) implicating at least in part histone demethylase KDM1A resulting in epigenomic repression, and SLC10A1/NTCP (involved in hepatic uptake of conjugated BAs). Activates transcription of the repressor MAFG (involved in regulation of BA synthesis). Activates transcription of SLC27A5/BACS and BAAT (involved in BA conjugation), ABCB11/BSEP (involved in bile salt export) by directly recruiting histone methyltransferase CARM1, and ABCC2/MRP2 (involved in secretion of conjugated BAs) and ABCB4 (involved in secretion of phosphatidylcholine in the small intestine). In ileal enterocytes activates FABP6/IBABP (involved in cytosolic transport), SLC51A/OSTA and SLC51B/OSTB (involved in secretion of conjugated BAs to the portal blood), and repressor NR0B2/SHP thereby indirectly inhibiting SLC10A2/ASBT (involved in BA uptake). In the intestine activates FGF15 expression and secretion leading to hepatic CYP7A1 repression; the function also involves the coordinated induction of hepatic KLB/beta-klotho expression. Transcriptional activation of FABP6/IBAP and SCD1 but not of ABCB11 is isoform-specific. Regulates transcription of liver UGT2B4 and SULT2A1 involved in BA detoxification; binding to the UGT2B4 promoter seems to imply a monomeric transactivation independent of RXRA. Modulates lipid homeostasis by activating liver NR0B2/SHP-mediated repression of SREBF1 isoform SREBP-1C (involved in de novo lipogenesis), expression of PLTP (involved in HDL formation), SCARB1 (involved in HDL hepatic uptake), APOE, APOC1, APOC4, VLDLR and SDC1 (involved in the hepatic uptake of LDL and IDL remnants), and inhibiting expression of MTTP (involved in VLDL assembly). Increases expression of APOC2 (promoting lipoprotein lipase activity implicated in triglyceride clearance). Transrepresses APOA1 probably involving a monomeric competition with NR2A1 for binding to a DR1 element. Also reduces triglyceride clearance by inhibiting expression of ANGPTL3 and APOC3 (both involved in inhibition of lipoprotein lipase). Involved in glucose homeostasis by modulating hepatic gluconeogenesis through activation of NR0B2/SHP-mediated repression of respective genes. Modulates glycogen synthesis (inducing phosphorylation of glycogen synthase kinase-3). Modulates glucose-stimulated insulin secretion and is involved in insulin resistance. Involved in intestinal innate immunity. Plays a role in protecting the distal small intestine against bacterial overgrowth and preservation of the epithelial barrier. Down-regulates inflammatory cytokine expression in several types of immune cells including macrophages and mononuclear cells. Mediates transrepression of TLR4-induced cytokine expression; the function seems to require its sumoylation and prevents N-CoR nuclear receptor corepressor clearance from target genes such as IL1B and NOS2. Involved in the TLR9-mediated protective mechanism in intestinal inflammation. Plays a anti-inflammatory role in liver inflammation; proposed to inhibit pro-inflammatory (but not antiapoptotic) NF-kappa-B signaling. Its function is as follows. Activates transcription of IBAP and SDC1. The sequence is that of Bile acid receptor (Nr1h4) from Mus musculus (Mouse).